The following is a 447-amino-acid chain: UPF0210 protein lp_2507 (447 aa).

Belongs to the UPF0210 family. In terms of assembly, homodimer.

In Lactiplantibacillus plantarum (strain ATCC BAA-793 / NCIMB 8826 / WCFS1) (Lactobacillus plantarum), this protein is UPF0210 protein lp_2507.